The chain runs to 368 residues: Dual-specificity RNA methyltransferase RlmN (368 aa).

Catalysis depends on E94, which acts as the Proton acceptor. One can recognise a Radical SAM core domain in the interval 100–334 (EEDRATLCVS…VIVRKTRGDD (235 aa)). The cysteines at positions 107 and 339 are disulfide-linked. The [4Fe-4S] cluster site is built by C114, C118, and C121. S-adenosyl-L-methionine is bound by residues 163-164 (GE), S195, 217-219 (SLH), and N296. C339 (S-methylcysteine intermediate) is an active-site residue.

This sequence belongs to the radical SAM superfamily. RlmN family. [4Fe-4S] cluster is required as a cofactor.

The protein resides in the cytoplasm. It carries out the reaction adenosine(2503) in 23S rRNA + 2 reduced [2Fe-2S]-[ferredoxin] + 2 S-adenosyl-L-methionine = 2-methyladenosine(2503) in 23S rRNA + 5'-deoxyadenosine + L-methionine + 2 oxidized [2Fe-2S]-[ferredoxin] + S-adenosyl-L-homocysteine. It catalyses the reaction adenosine(37) in tRNA + 2 reduced [2Fe-2S]-[ferredoxin] + 2 S-adenosyl-L-methionine = 2-methyladenosine(37) in tRNA + 5'-deoxyadenosine + L-methionine + 2 oxidized [2Fe-2S]-[ferredoxin] + S-adenosyl-L-homocysteine. Specifically methylates position 2 of adenine 2503 in 23S rRNA and position 2 of adenine 37 in tRNAs. m2A2503 modification seems to play a crucial role in the proofreading step occurring at the peptidyl transferase center and thus would serve to optimize ribosomal fidelity. This Aeromonas salmonicida (strain A449) protein is Dual-specificity RNA methyltransferase RlmN.